Here is a 208-residue protein sequence, read N- to C-terminus: Thymidylate kinase (208 aa).

Position 7 to 14 (7 to 14) interacts with ATP; the sequence is GIDGSGKS.

It belongs to the thymidylate kinase family.

The catalysed reaction is dTMP + ATP = dTDP + ADP. In terms of biological role, phosphorylation of dTMP to form dTDP in both de novo and salvage pathways of dTTP synthesis. This Kosmotoga olearia (strain ATCC BAA-1733 / DSM 21960 / TBF 19.5.1) protein is Thymidylate kinase.